The sequence spans 461 residues: Bifunctional protein GlmU (461 aa).

The segment at 1–232 (MNLQIIILAA…SFEVQGINNR (232 aa)) is pyrophosphorylase. Residues 8 to 11 (LAAG), lysine 22, glutamine 73, and 78 to 79 (GT) contribute to the UDP-N-acetyl-alpha-D-glucosamine site. Aspartate 102 lines the Mg(2+) pocket. UDP-N-acetyl-alpha-D-glucosamine-binding residues include glycine 142, glutamate 157, and asparagine 230. Asparagine 230 is a Mg(2+) binding site. Residues 233–253 (QQLQQLERIWQQRAANQLMEK) form a linker region. The N-acetyltransferase stretch occupies residues 254-461 (GATLADANRF…WKRPVKRERD (208 aa)). UDP-N-acetyl-alpha-D-glucosamine-binding residues include arginine 336 and lysine 354. Histidine 366 serves as the catalytic Proton acceptor. Residues tyrosine 369 and asparagine 380 each contribute to the UDP-N-acetyl-alpha-D-glucosamine site. Acetyl-CoA is bound by residues alanine 383, 389–390 (NY), serine 408, and alanine 426.

This sequence in the N-terminal section; belongs to the N-acetylglucosamine-1-phosphate uridyltransferase family. The protein in the C-terminal section; belongs to the transferase hexapeptide repeat family. Homotrimer. Mg(2+) serves as cofactor.

It is found in the cytoplasm. It carries out the reaction alpha-D-glucosamine 1-phosphate + acetyl-CoA = N-acetyl-alpha-D-glucosamine 1-phosphate + CoA + H(+). It catalyses the reaction N-acetyl-alpha-D-glucosamine 1-phosphate + UTP + H(+) = UDP-N-acetyl-alpha-D-glucosamine + diphosphate. It participates in nucleotide-sugar biosynthesis; UDP-N-acetyl-alpha-D-glucosamine biosynthesis; N-acetyl-alpha-D-glucosamine 1-phosphate from alpha-D-glucosamine 6-phosphate (route II): step 2/2. It functions in the pathway nucleotide-sugar biosynthesis; UDP-N-acetyl-alpha-D-glucosamine biosynthesis; UDP-N-acetyl-alpha-D-glucosamine from N-acetyl-alpha-D-glucosamine 1-phosphate: step 1/1. Its pathway is bacterial outer membrane biogenesis; LPS lipid A biosynthesis. Functionally, catalyzes the last two sequential reactions in the de novo biosynthetic pathway for UDP-N-acetylglucosamine (UDP-GlcNAc). The C-terminal domain catalyzes the transfer of acetyl group from acetyl coenzyme A to glucosamine-1-phosphate (GlcN-1-P) to produce N-acetylglucosamine-1-phosphate (GlcNAc-1-P), which is converted into UDP-GlcNAc by the transfer of uridine 5-monophosphate (from uridine 5-triphosphate), a reaction catalyzed by the N-terminal domain. This is Bifunctional protein GlmU from Legionella pneumophila subsp. pneumophila (strain Philadelphia 1 / ATCC 33152 / DSM 7513).